We begin with the raw amino-acid sequence, 452 residues long: Translation initiation factor eIF2B subunit gamma (452 aa).

The residue at position 1 (Met-1) is an N-acetylmethionine. Position 261 is a phosphoserine (Ser-261).

It belongs to the eIF-2B gamma/epsilon subunits family. Component of the translation initiation factor 2B (eIF2B) complex which is a heterodecamer of two sets of five different subunits: alpha, beta, gamma, delta and epsilon. Subunits alpha, beta and delta comprise a regulatory subcomplex and subunits epsilon and gamma comprise a catalytic subcomplex. Within the complex, the hexameric regulatory complex resides at the center, with the two heterodimeric catalytic subcomplexes bound on opposite sides.

Its subcellular location is the cytoplasm. The protein localises to the cytosol. Its activity is regulated as follows. Activated by the chemical integrated stress response (ISR) inhibitor ISRIB which stimulates guanine nucleotide exchange factor activity for both phosphorylated and unphosphorylated eIF2. In terms of biological role, acts as a component of the translation initiation factor 2B (eIF2B) complex, which catalyzes the exchange of GDP for GTP on the eukaryotic initiation factor 2 (eIF2) complex gamma subunit. Its guanine nucleotide exchange factor activity is repressed when bound to eIF2 complex phosphorylated on the alpha subunit, thereby limiting the amount of methionyl-initiator methionine tRNA available to the ribosome and consequently global translation is repressed. The sequence is that of Translation initiation factor eIF2B subunit gamma (EIF2B3) from Bos taurus (Bovine).